A 124-amino-acid polypeptide reads, in one-letter code: Small ribosomal subunit protein uS12 (124 aa).

Residues 1 to 20 (MATISQLVRNPRKDKVQKTS) are disordered. Asp89 is subject to 3-methylthioaspartic acid. Positions 104 to 124 (TSGVTARRKGRSKYGAKRPKA) are disordered. Over residues 109–124 (ARRKGRSKYGAKRPKA) the composition is skewed to basic residues.

Belongs to the universal ribosomal protein uS12 family. As to quaternary structure, part of the 30S ribosomal subunit. Contacts proteins S8 and S17. May interact with IF1 in the 30S initiation complex.

Functionally, with S4 and S5 plays an important role in translational accuracy. In terms of biological role, interacts with and stabilizes bases of the 16S rRNA that are involved in tRNA selection in the A site and with the mRNA backbone. Located at the interface of the 30S and 50S subunits, it traverses the body of the 30S subunit contacting proteins on the other side and probably holding the rRNA structure together. The combined cluster of proteins S8, S12 and S17 appears to hold together the shoulder and platform of the 30S subunit. The chain is Small ribosomal subunit protein uS12 from Psychromonas ingrahamii (strain DSM 17664 / CCUG 51855 / 37).